A 178-amino-acid chain; its full sequence is Large ribosomal subunit protein bL25 (178 aa).

The protein belongs to the bacterial ribosomal protein bL25 family. CTC subfamily. As to quaternary structure, part of the 50S ribosomal subunit; part of the 5S rRNA/L5/L18/L25 subcomplex. Contacts the 5S rRNA. Binds to the 5S rRNA independently of L5 and L18.

Its function is as follows. This is one of the proteins that binds to the 5S RNA in the ribosome where it forms part of the central protuberance. This is Large ribosomal subunit protein bL25 from Helicobacter pylori (strain HPAG1).